Reading from the N-terminus, the 238-residue chain is Major prion protein (238 aa).

Positions 1-15 are cleaved as a signal peptide; the sequence is MLVLFVATWSDLGLC. Residues 16–215 are interaction with GRB2, ERI3 and SYN1; it reads KKRPKPGGWN…ESQAYYQRGS (200 aa). The tract at residues 18–93 is disordered; that stretch reads RPKPGGWNTG…WHKPSKPKTS (76 aa). A run of 4 repeats spans residues 44-52, 53-60, 61-68, and 69-76. Residues 44 to 83 form a 4 X 8 AA tandem repeats of P-H-G-G-G-W-G-Q region; it reads PQGGGGWGQPHGGGWGQPHGGGWGQPHGGGWGQGGGTHNQ. Over residues 45 to 80 the composition is skewed to gly residues; sequence QGGGGWGQPHGGGWGQPHGGGWGQPHGGGWGQGGGT. G47, G48, H54, G55, G56, H62, G63, G64, H70, G71, and G72 together coordinate Cu(2+). Positions 83-93 are enriched in basic residues; it reads QWHKPSKPKTS. C164 and C199 are joined by a disulfide. 2 N-linked (GlcNAc...) asparagine glycosylation sites follow: N166 and N182. Residue S215 is the site of GPI-anchor amidated serine attachment. Residues 216-238 constitute a propeptide, removed in mature form; the sequence is SIVLFSSPPVILLISFLIFLIVG.

It belongs to the prion family. In terms of assembly, monomer and homodimer. Has a tendency to aggregate into amyloid fibrils containing a cross-beta spine, formed by a steric zipper of superposed beta-strands. Soluble oligomers may represent an intermediate stage on the path to fibril formation. Copper binding may promote oligomerization. Interacts with GRB2, APP, ERI3/PRNPIP and SYN1. Mislocalized cytosolically exposed PrP interacts with MGRN1; this interaction alters MGRN1 subcellular location and causes lysosomal enlargement. Interacts with KIAA1191.

Its subcellular location is the cell membrane. It localises to the golgi apparatus. Its function is as follows. Its primary physiological function is unclear. Has cytoprotective activity against internal or environmental stresses. May play a role in neuronal development and synaptic plasticity. May be required for neuronal myelin sheath maintenance. May play a role in iron uptake and iron homeostasis. Soluble oligomers are toxic to cultured neuroblastoma cells and induce apoptosis (in vitro). Association with GPC1 (via its heparan sulfate chains) targets PRNP to lipid rafts. Also provides Cu(2+) or Zn(2+) for the ascorbate-mediated GPC1 deaminase degradation of its heparan sulfate side chains. This chain is Major prion protein (PRNP), found in Theropithecus gelada (Gelada baboon).